A 176-amino-acid polypeptide reads, in one-letter code: NAD(P)H-quinone oxidoreductase subunit J (176 aa).

It belongs to the complex I 30 kDa subunit family. NDH-1 can be composed of about 15 different subunits; different subcomplexes with different compositions have been identified which probably have different functions.

Its subcellular location is the cellular thylakoid membrane. It catalyses the reaction a plastoquinone + NADH + (n+1) H(+)(in) = a plastoquinol + NAD(+) + n H(+)(out). The catalysed reaction is a plastoquinone + NADPH + (n+1) H(+)(in) = a plastoquinol + NADP(+) + n H(+)(out). Functionally, NDH-1 shuttles electrons from an unknown electron donor, via FMN and iron-sulfur (Fe-S) centers, to quinones in the respiratory and/or the photosynthetic chain. The immediate electron acceptor for the enzyme in this species is believed to be plastoquinone. Couples the redox reaction to proton translocation, and thus conserves the redox energy in a proton gradient. Cyanobacterial NDH-1 also plays a role in inorganic carbon-concentration. This Prochlorococcus marinus (strain MIT 9515) protein is NAD(P)H-quinone oxidoreductase subunit J.